We begin with the raw amino-acid sequence, 537 residues long: Hexosyltransferase GAUT11 (537 aa).

At 1-16 the chain is on the cytoplasmic side; sequence MRRWPVDHRRRGRRRL. Residues 17–37 traverse the membrane as a helical; Signal-anchor for type II membrane protein segment; it reads SSWIWFLLGSFSVAGLVLFIV. Topologically, residues 38-537 are lumenal; the sequence is QHYHHQQDPS…HPYLQDCVTA (500 aa). N-linked (GlcNAc...) asparagine glycans are attached at residues asparagine 66, asparagine 247, asparagine 299, asparagine 403, asparagine 436, and asparagine 525.

It belongs to the glycosyltransferase 8 family. Monomer. Expressed in roots, inflorescences, siliques, seeds, leaves and stems.

It is found in the golgi apparatus membrane. It catalyses the reaction [(1-&gt;4)-alpha-D-galacturonosyl](n) + UDP-alpha-D-galacturonate = [(1-&gt;4)-alpha-D-galacturonosyl](n+1) + UDP + H(+). It participates in glycan metabolism; pectin biosynthesis. In terms of biological role, glycosyltransferase involved in pectin and/or xylans biosynthesis in cell walls. Required for the biosynthesis of pectin in seed coat epidermal (SCE) cells. Collaboratively with MUCI70, essential for the accumulation of seed mucilage, a gelatinous wall rich in unbranched rhamnogalacturonan I (RG I), and for shaping the surface morphology of seeds. Catalyzes homogalacturonan (HG) elongation by acting as an HG alpha-1,4 galacturonic acid transferase. The polypeptide is Hexosyltransferase GAUT11 (Arabidopsis thaliana (Mouse-ear cress)).